Consider the following 138-residue polypeptide: Large ribosomal subunit protein uL16 (138 aa).

Over residues 1–13 (MLQPKRRKYRKEQ) the composition is skewed to basic residues. The tract at residues 1–20 (MLQPKRRKYRKEQKGRNTGI) is disordered.

It belongs to the universal ribosomal protein uL16 family. As to quaternary structure, part of the 50S ribosomal subunit.

Its function is as follows. Binds 23S rRNA and is also seen to make contacts with the A and possibly P site tRNAs. The chain is Large ribosomal subunit protein uL16 from Paraburkholderia phytofirmans (strain DSM 17436 / LMG 22146 / PsJN) (Burkholderia phytofirmans).